The chain runs to 156 residues: Ribosome maturation factor RimP (156 aa).

Belongs to the RimP family.

It is found in the cytoplasm. Functionally, required for maturation of 30S ribosomal subunits. The sequence is that of Ribosome maturation factor RimP from Fusobacterium nucleatum subsp. nucleatum (strain ATCC 25586 / DSM 15643 / BCRC 10681 / CIP 101130 / JCM 8532 / KCTC 2640 / LMG 13131 / VPI 4355).